We begin with the raw amino-acid sequence, 435 residues long: Probable protein arginine N-methyltransferase 6 (435 aa).

Residues 1–48 (MQSGGDFSNGFHGDHHRELELEDKQGPSLSSFGRAKKRSHAGARDPRG) are disordered. Over residues 12-25 (HGDHHRELELEDKQ) the composition is skewed to basic and acidic residues. Positions 80–418 (DVAYFHSYAH…KENKRFMNIH (339 aa)) constitute an SAM-dependent MTase PRMT-type domain. S-adenosyl-L-methionine-binding residues include His93, Arg102, Gly126, Asp148, and Glu177. Catalysis depends on residues Glu191 and Glu200. Positions 333–377 (PAKNTSETSIASGSSSISPSGEVNQKKRTNPSDALVLSTSPESPP) are disordered. Positions 337 to 354 (TSETSIASGSSSISPSGE) are enriched in low complexity.

This sequence belongs to the class I-like SAM-binding methyltransferase superfamily. Protein arginine N-methyltransferase family. PRMT6 subfamily.

Its function is as follows. Arginine methyltransferase that can both catalyze the formation of omega-N monomethylarginine (MMA) and asymmetrical dimethylarginine (aDMA). This Arabidopsis thaliana (Mouse-ear cress) protein is Probable protein arginine N-methyltransferase 6 (PRMT6).